The sequence spans 715 residues: MSPHQTTGQESDNMAVNGENAPASSQYIQTNNDEMADMVAAEKKAAAAKAAKDPSRPKRKKAKRACYACQRGHLTCGDERPCQRCIKRGFQDACHDGVRKKAKYLHDAPNEVLMAGVGATLYNQRNAAQNNVNGSNTSPGVPQQMTSPNFYSTQQSPDYNSFPQNKNELHDSTVGPENYASQSPVSPTYQIGQGMPNPVLSPSLPQSASETPSTANAAPGQFNSAFFDPSDPALFNFDLASMNFGNHYGALEFGMLGHMATGVGDTPPSDSGAQRGSIGQNGSGTFGLAGSNFAESPSNQTPYLFNESGMNDWTQTAPVNRRSIYGSNANMVAGNMSDKPHAFAIESAPANFASPASNESPMMTTNSATFEDTTNSGAFSSRPNASVSQQRQQPVVSTPQLKQQNLNLGGRRRHKNASSIYDSVKDPYSYTSGFHSLTAFIQRRFSPQKTLRIAKALASIRPSFIATTKTLNRDDLIFMEKCFQRTLWEYEDFINACGTPTIVCRRTGEIAAVGKEFSILTGWRKEVLLGKEPNHNVNTGGSSGLVTDSTSRGSYTPRPYSSDVYNSSTAATPRTQPVFLAELLDDDSVIEFYEDFAKLAFGDSRGSVMTTCKLLKYKTKADSDILAGSNGEADAGQNGEASSSEANELNGSNANGATTNGRGLRRWGKGEIAGEAGMNQLGFRDGKVECSYCWTVKRDVFDIPMLIVMNFLPCI.

Residues Met-1–Met-14 are compositionally biased toward polar residues. Positions Met-1–Ile-28 are disordered. A DNA-binding region (zn(2)-C6 fungal-type) is located at residues Cys-66–Cys-94. Polar residues-rich tracts occupy residues Gln-129–Lys-166, Tyr-179–Ile-191, Ser-203–Asn-223, and Met-362–Ala-385. 4 disordered regions span residues Gln-129–Asn-223, Ser-354–His-414, Asn-534–Thr-569, and Gly-628–Gly-663. A compositionally biased stretch (low complexity) spans Ser-386–Gln-400. Composition is skewed to polar residues over residues His-535–Ser-554 and Gly-639–Leu-649. A compositionally biased stretch (low complexity) spans Asn-650–Arg-662.

The protein belongs to the ERT1/acuK family.

It is found in the nucleus. Functionally, transcription factor which regulates nonfermentable carbon utilization. Activator of gluconeogenetic genes. This is Transcription activator of gluconeogenesis MGYG_02011 from Arthroderma gypseum (strain ATCC MYA-4604 / CBS 118893) (Microsporum gypseum).